Consider the following 78-residue polypeptide: Serine rich endogenous peptide 19 (78 aa).

An N-terminal signal peptide occupies residues 1–25 (MCNIVVFLLTLTLFLFSGLSNTAFA). The SCOOP motif signature appears at 50-64 (KIEVDGSCSRRAPGR). A SxS motif essential for MIK2 binding motif is present at residues 56 to 58 (SCS). The interval 57–78 (CSRRAPGRRRPPNRPPKPCTKP) is disordered. Residues 69-78 (NRPPKPCTKP) are compositionally biased toward pro residues.

It belongs to the serine rich endogenous peptide (SCOOP) phytocytokine family. As to quaternary structure, interacts with MIK2 (via extracellular leucine-rich repeat domain); this interaction triggers the formation of complex between MIK2 and the BAK1/SERK3 and SERK4 coreceptors, and subsequent BAK1 activation by phosphorylation.

It localises to the cell membrane. It is found in the secreted. Its subcellular location is the extracellular space. The protein localises to the apoplast. Its function is as follows. Brassicaceae-specific phytocytokine (plant endogenous peptide released into the apoplast) perceived by MIK2 in a BAK1/SERK3 and SERK4 coreceptors-dependent manner, that modulates various physiological and antimicrobial processes including growth prevention and reactive oxygen species (ROS) response regulation. This is Serine rich endogenous peptide 19 from Arabidopsis thaliana (Mouse-ear cress).